The sequence spans 37 residues: MTTISSFPSIFVPLVGLVFPAIAMASLSLYVQKTKIF.

Residues 10-30 traverse the membrane as a helical segment; the sequence is IFVPLVGLVFPAIAMASLSLY.

The protein belongs to the PsaI family.

The protein resides in the plastid. It is found in the chloroplast thylakoid membrane. May help in the organization of the PsaL subunit. This is Photosystem I reaction center subunit VIII from Gossypium barbadense (Sea Island cotton).